The primary structure comprises 181 residues: MSNKAVANRYAVALFELAEEKGQTDVFERELELVQEVFETTPQLETVLAQPGLAADKKQALLRDAFQAHLSPAVMNTINLLMERGRYSEIVGLAGEYKQLNDDKKGIAEATVFSVKALSDSEKNQIAAVFAPKAGKRELRVVNVVDSALIGGLKVRVGDRVFDGSIQGQLKRLEKQLVAGQ.

The protein belongs to the ATPase delta chain family. As to quaternary structure, F-type ATPases have 2 components, F(1) - the catalytic core - and F(0) - the membrane proton channel. F(1) has five subunits: alpha(3), beta(3), gamma(1), delta(1), epsilon(1). F(0) has three main subunits: a(1), b(2) and c(10-14). The alpha and beta chains form an alternating ring which encloses part of the gamma chain. F(1) is attached to F(0) by a central stalk formed by the gamma and epsilon chains, while a peripheral stalk is formed by the delta and b chains.

Its subcellular location is the cell membrane. In terms of biological role, f(1)F(0) ATP synthase produces ATP from ADP in the presence of a proton or sodium gradient. F-type ATPases consist of two structural domains, F(1) containing the extramembraneous catalytic core and F(0) containing the membrane proton channel, linked together by a central stalk and a peripheral stalk. During catalysis, ATP synthesis in the catalytic domain of F(1) is coupled via a rotary mechanism of the central stalk subunits to proton translocation. Functionally, this protein is part of the stalk that links CF(0) to CF(1). It either transmits conformational changes from CF(0) to CF(1) or is implicated in proton conduction. The chain is ATP synthase subunit delta from Shouchella clausii (strain KSM-K16) (Alkalihalobacillus clausii).